The following is a 265-amino-acid chain: Putative cysteine-rich receptor-like protein kinase 9 (265 aa).

The N-terminal stretch at 1-23 is a signal peptide; it reads MSSLISFIFLFLFSFLTSFKASA. Gnk2-homologous domains follow at residues 27 to 131 and 142 to 244; these read FYLN…DKNI and FILS…LYSF. N-linked (GlcNAc...) asparagine glycans are attached at residues N35, N60, N69, N153, N177, and N246.

This sequence belongs to the protein kinase superfamily. Ser/Thr protein kinase family. CRK subfamily.

The protein resides in the secreted. This is Putative cysteine-rich receptor-like protein kinase 9 (CRK9) from Arabidopsis thaliana (Mouse-ear cress).